The primary structure comprises 395 residues: 1-deoxy-D-xylulose 5-phosphate reductoisomerase (395 aa).

NADPH-binding residues include threonine 10, glycine 11, serine 12, isoleucine 13, asparagine 38, and asparagine 122. Lysine 123 is a 1-deoxy-D-xylulose 5-phosphate binding site. Glutamate 124 serves as a coordination point for NADPH. Aspartate 148 is a Mn(2+) binding site. 1-deoxy-D-xylulose 5-phosphate-binding residues include serine 149, glutamate 150, serine 178, and histidine 200. Glutamate 150 is a binding site for Mn(2+). Glycine 206 serves as a coordination point for NADPH. The 1-deoxy-D-xylulose 5-phosphate site is built by serine 213, asparagine 218, lysine 219, and glutamate 222. Glutamate 222 is a binding site for Mn(2+).

Belongs to the DXR family. The cofactor is Mg(2+). It depends on Mn(2+) as a cofactor.

It carries out the reaction 2-C-methyl-D-erythritol 4-phosphate + NADP(+) = 1-deoxy-D-xylulose 5-phosphate + NADPH + H(+). It participates in isoprenoid biosynthesis; isopentenyl diphosphate biosynthesis via DXP pathway; isopentenyl diphosphate from 1-deoxy-D-xylulose 5-phosphate: step 1/6. In terms of biological role, catalyzes the NADPH-dependent rearrangement and reduction of 1-deoxy-D-xylulose-5-phosphate (DXP) to 2-C-methyl-D-erythritol 4-phosphate (MEP). This chain is 1-deoxy-D-xylulose 5-phosphate reductoisomerase, found in Elusimicrobium minutum (strain Pei191).